We begin with the raw amino-acid sequence, 74 residues long: Dermaseptin-B3 (74 aa).

The signal sequence occupies residues 1 to 22; it reads MAFLKKSVFLVLFLGLVSLSIC. Positions 23–43 are excised as a propeptide; the sequence is EEEKREEENEEKQEDDEQSEE.

Expressed by the skin glands.

The protein resides in the secreted. In terms of biological role, possesses a potent antimicrobial activity against Gram-positive and Gram-negative bacteria. Probably acts by disturbing membrane functions with its amphipathic structure. This is Dermaseptin-B3 from Phyllomedusa bicolor (Two-colored leaf frog).